A 393-amino-acid chain; its full sequence is Major tail sheath protein (393 aa).

It belongs to the myoviridae tail sheath protein family.

Its subcellular location is the virion. Forms the virus contractile tail sheath. This chain is Major tail sheath protein, found in Serratia phage KSP20 (Serratia marcescens bacteriophage KSP20).